The sequence spans 110 residues: Thioredoxin (110 aa).

The region spanning Lys3 to Ala108 is the Thioredoxin domain. A disulfide bridge links Cys32 with Cys35. Lys105 carries the N6,N6-dimethyllysine; alternate modification. Lys105 carries the N6-methyllysine; alternate modification.

Participates in various redox reactions through the reversible oxidation of its active center dithiol to a disulfide and catalyzes dithiol-disulfide exchange reactions. The polypeptide is Thioredoxin (trxA) (Chloroflexus aurantiacus (strain ATCC 29366 / DSM 635 / J-10-fl)).